We begin with the raw amino-acid sequence, 102 residues long: Large ribosomal subunit protein bL21 (102 aa).

This sequence belongs to the bacterial ribosomal protein bL21 family. As to quaternary structure, part of the 50S ribosomal subunit. Contacts protein L20.

This protein binds to 23S rRNA in the presence of protein L20. The chain is Large ribosomal subunit protein bL21 from Photorhabdus laumondii subsp. laumondii (strain DSM 15139 / CIP 105565 / TT01) (Photorhabdus luminescens subsp. laumondii).